Here is a 118-residue protein sequence, read N- to C-terminus: Ribosome-binding factor A (118 aa).

Belongs to the RbfA family. Monomer. Binds 30S ribosomal subunits, but not 50S ribosomal subunits or 70S ribosomes.

It is found in the cytoplasm. Functionally, one of several proteins that assist in the late maturation steps of the functional core of the 30S ribosomal subunit. Associates with free 30S ribosomal subunits (but not with 30S subunits that are part of 70S ribosomes or polysomes). Required for efficient processing of 16S rRNA. May interact with the 5'-terminal helix region of 16S rRNA. The chain is Ribosome-binding factor A from Bacillus thuringiensis (strain Al Hakam).